A 123-amino-acid chain; its full sequence is Small ribosomal subunit protein uS12cz/uS12cy (123 aa).

It belongs to the universal ribosomal protein uS12 family. Part of the 30S ribosomal subunit.

The protein localises to the plastid. It is found in the chloroplast. Its function is as follows. With S4 and S5 plays an important role in translational accuracy. Located at the interface of the 30S and 50S subunits. This Phaseolus vulgaris (Kidney bean) protein is Small ribosomal subunit protein uS12cz/uS12cy (rps12-A).